The sequence spans 434 residues: Perilipin-3 (434 aa).

Residues 1–22 are disordered; it reads MSADGAEADGSTQVTVEEPVQQ. Ser-2 is subject to N-acetylserine. At Ser-31 the chain carries Phosphoserine. Lys-65 bears the N6-acetyllysine mark. Ser-91 carries the phosphoserine modification. Lys-122 is covalently cross-linked (Glycyl lysine isopeptide (Lys-Gly) (interchain with G-Cter in SUMO1)). Phosphoserine is present on residues Ser-130 and Ser-148. Thr-170 bears the Phosphothreonine mark. Phosphoserine is present on residues Ser-175 and Ser-179. The residue at position 216 (Thr-216) is a Phosphothreonine. Phosphoserine is present on residues Ser-217 and Ser-241. The residue at position 251 (Tyr-251) is a Phosphotyrosine. Coiled-coil stretches lie at residues 252–280 and 353–377; these read EHSLGKLRATKQRAQEALLQLSQALSLME and TNVKDQVQQARRQVEDLQATFSSIH.

Belongs to the perilipin family. Homooligomer. Interacts with M6PR (via the cytoplasmic domain). Interacts with IGF2R (via the cytoplasmic domain). Post-translationally, phosphorylation at Tyr-251 by isoform 1 of CHKA (CHKalpha2) promotes dissociation from lipid droplets: dissociation is followed by recruitment of autophagosome machinery to lipid droplets and subsequent lipid droplet lipolysis.

The protein resides in the lipid droplet. It is found in the endosome membrane. Its subcellular location is the cytoplasm. Functionally, structural component of lipid droplets, which is required for the formation and maintenance of lipid storage droplets. Required for the transport of mannose 6-phosphate receptors (MPR) from endosomes to the trans-Golgi network. This chain is Perilipin-3 (PLIN3), found in Pongo abelii (Sumatran orangutan).